The following is a 486-amino-acid chain: Kynurenine 3-monooxygenase (486 aa).

FAD is bound by residues valine 19, 37-40, and alanine 57; that span reads YEAR. Positions 85 and 99 each coordinate L-kynurenine. Residues arginine 111, leucine 136, threonine 172, aspartate 304, and 317–318 each bind FAD; that span reads MN. 2 residues coordinate L-kynurenine: asparagine 363 and tyrosine 398. A run of 2 helical transmembrane segments spans residues 385 to 404 and 425 to 445; these read FLHA…VTFS and GLFF…IHYM. Asparagine 465 carries an N-linked (GlcNAc...) asparagine glycan.

The protein belongs to the aromatic-ring hydroxylase family. KMO subfamily. The cofactor is FAD. As to expression, highest levels in placenta and liver. Detectable in kidney.

It is found in the mitochondrion outer membrane. It carries out the reaction L-kynurenine + NADPH + O2 + H(+) = 3-hydroxy-L-kynurenine + NADP(+) + H2O. Its pathway is cofactor biosynthesis; NAD(+) biosynthesis; quinolinate from L-kynurenine: step 1/3. Functionally, catalyzes the hydroxylation of L-kynurenine (L-Kyn) to form 3-hydroxy-L-kynurenine (L-3OHKyn). Required for synthesis of quinolinic acid, a neurotoxic NMDA receptor antagonist and potential endogenous inhibitor of NMDA receptor signaling in axonal targeting, synaptogenesis and apoptosis during brain development. Quinolinic acid may also affect NMDA receptor signaling in pancreatic beta cells, osteoblasts, myocardial cells, and the gastrointestinal tract. The protein is Kynurenine 3-monooxygenase of Homo sapiens (Human).